A 52-amino-acid polypeptide reads, in one-letter code: Rubredoxin (52 aa).

Residues 1–52 enclose the Rubredoxin-like domain; the sequence is MKKYVCTVCGYEYDPAEGDPDNGVKPGTSFDDLPADWVCPVCGAPKSEFEAA. Fe cation contacts are provided by cysteine 6, cysteine 9, cysteine 39, and cysteine 42.

This sequence belongs to the rubredoxin family. Fe(3+) serves as cofactor.

The protein localises to the cytoplasm. Functionally, rubredoxin is a small nonheme, iron protein lacking acid-labile sulfide. Its single Fe, chelated to 4 Cys, functions as an electron acceptor and may also stabilize the conformation of the molecule. Its function is as follows. Electron acceptor for cytoplasmic lactate dehydrogenase. This is Rubredoxin (rub) from Nitratidesulfovibrio vulgaris (strain ATCC 29579 / DSM 644 / CCUG 34227 / NCIMB 8303 / VKM B-1760 / Hildenborough) (Desulfovibrio vulgaris).